A 369-amino-acid polypeptide reads, in one-letter code: Peptide chain release factor 2 (369 aa).

Gln-252 carries the N5-methylglutamine modification.

The protein belongs to the prokaryotic/mitochondrial release factor family. Methylated by PrmC. Methylation increases the termination efficiency of RF2.

It localises to the cytoplasm. In terms of biological role, peptide chain release factor 2 directs the termination of translation in response to the peptide chain termination codons UGA and UAA. This chain is Peptide chain release factor 2, found in Staphylococcus aureus (strain MRSA252).